Reading from the N-terminus, the 199-residue chain is Small ribosomal subunit protein uS2 (199 aa).

Belongs to the universal ribosomal protein uS2 family.

In Thermoplasma acidophilum (strain ATCC 25905 / DSM 1728 / JCM 9062 / NBRC 15155 / AMRC-C165), this protein is Small ribosomal subunit protein uS2 (rps2).